The following is a 91-amino-acid chain: Protein LURE 1.3 (91 aa).

The N-terminal stretch at 1–20 is a signal peptide; the sequence is MKLPFIFLITLLIFVSSCTS. An N-linked (GlcNAc...) asparagine glycan is attached at N24. Cystine bridges form between C59-C76, C62-C83, and C66-C85. The segment at 68–88 is PRK6 binding; it reads RRGKYIRTCSFERKLCRCSIS.

It belongs to the DEFL family. In terms of assembly, binds to PRK6 LRRs. In terms of tissue distribution, expressed in the pistil. Detected exclusively in the synergid cells.

The protein resides in the secreted. Functionally, pollen tube attractants guiding pollen tubes to the ovular micropyle. Attracts pollen tubes from both A.thaliana and A.lyrata. The protein is Protein LURE 1.3 of Arabidopsis thaliana (Mouse-ear cress).